The primary structure comprises 362 residues: S-adenosylmethionine decarboxylase proenzyme (362 aa).

Catalysis depends on residues Glu13 and Glu16. The active-site Schiff-base intermediate with substrate; via pyruvic acid is the Ser73. A Pyruvic acid (Ser); by autocatalysis modification is found at Ser73. Catalysis depends on Cys87, which acts as the Proton donor; for catalytic activity. Catalysis depends on proton acceptor; for processing activity residues Ser236 and His249.

This sequence belongs to the eukaryotic AdoMetDC family. Requires pyruvate as cofactor. Post-translationally, is synthesized initially as an inactive proenzyme. Formation of the active enzyme involves a self-maturation process in which the active site pyruvoyl group is generated from an internal serine residue via an autocatalytic post-translational modification. Two non-identical subunits are generated from the proenzyme in this reaction, and the pyruvate is formed at the N-terminus of the alpha chain, which is derived from the carboxyl end of the proenzyme. The post-translation cleavage follows an unusual pathway, termed non-hydrolytic serinolysis, in which the side chain hydroxyl group of the serine supplies its oxygen atom to form the C-terminus of the beta chain, while the remainder of the serine residue undergoes an oxidative deamination to produce ammonia and the pyruvoyl group blocking the N-terminus of the alpha chain.

It catalyses the reaction S-adenosyl-L-methionine + H(+) = S-adenosyl 3-(methylsulfanyl)propylamine + CO2. It functions in the pathway amine and polyamine biosynthesis; S-adenosylmethioninamine biosynthesis; S-adenosylmethioninamine from S-adenosyl-L-methionine: step 1/1. This Datura stramonium (Jimsonweed) protein is S-adenosylmethionine decarboxylase proenzyme (SAMDC).